The sequence spans 522 residues: MEGSINDARRTNYLVLLRTCYEIYGIYEPLLALFAVYSVAVVVYRLYLHPLARFPGPKLAAATGWYEFYHDVFRGGQYLYEIESMHRKYGPIIRINPHELVVNDPDFYNTVFVAANTRRTDKWSGLEGIGLRGSLAFTRDHDLHRIRRKRYEPFFSRLSVSRIEPIIVDEAKLLAKQLEASSKTGRVIELEHVMSAFTGDVITTLCSEKSPDMIRHPEFGKGWHTSLYNFPSCFRAGAFNSFLEYSTDHINTAKREMLSVDKLEQNNKSSVFRYVLSTDMPQAERDTERLAREAALLFGAGSVTTTRFFSVTIYYTLRNRQIRDRLSAELKDVMAGYPSTLPTWQELDRLPYLHAIVKEGLRYACPFVLSSSLAAWSSLSHKFSSRLSYGVMRHLSRISPDSALHYKQWTIPPGTPVGMSSYSLHTDPETFPEPFKFMPERWLGEYNPKMNRSWVPFTRGSRNCLGMNLAYAQIYWGLAVMFRPGGPRLELYETNESDIRPVLDFLGPLPKSGSRGLRVTVS.

The helical transmembrane segment at 23 to 43 (IYGIYEPLLALFAVYSVAVVV) threads the bilayer. Residues Asn-267 and Asn-451 are each glycosylated (N-linked (GlcNAc...) asparagine). Cys-464 contacts heme. An N-linked (GlcNAc...) asparagine glycan is attached at Asn-495.

It belongs to the cytochrome P450 family. Requires heme as cofactor.

Its subcellular location is the membrane. It carries out the reaction stellata-2,6,19-triene + 3 reduced [NADPH--hemoprotein reductase] + 3 O2 = stellatate + 3 oxidized [NADPH--hemoprotein reductase] + 4 H2O + 4 H(+). It participates in secondary metabolite biosynthesis; terpenoid biosynthesis. In terms of biological role, cytochrome P450 monooxygenase; part of the gene cluster that mediates the biosynthesis of the sesterterpene stellatic acid. The first step in the pathway is performed by the stellatatriene synthase that possesses both prenyl transferase and terpene cyclase activity, converting isopentenyl diphosphate and dimethylallyl diphosphate into geranylgeranyl diphosphate (GGDP) and then converting GGDP into stellata-2,6,19-triene. The cytochrome P450 monooxygenase Stl-P450 then catalyzes three successive oxidation reactions on the C-20 methyl group to generate the carboxylic acid of stellatic acid. This Emericella variicolor (Aspergillus stellatus) protein is Stellatic acid synthase.